A 268-amino-acid polypeptide reads, in one-letter code: Fibroblast growth factor 5 (268 aa).

The first 20 residues, 1 to 20 (MSLSFLLLLFFSHLILSAWA), serve as a signal peptide directing secretion. A disordered region spans residues 26-81 (LAPKGQPGPAATDRNPRGSSSRQSSSSAMSSSSASSSPAASLGSQGSGLEQSSFQW). Over residues 43 to 80 (GSSSRQSSSSAMSSSSASSSPAASLGSQGSGLEQSSFQ) the composition is skewed to low complexity. An N-linked (GlcNAc...) asparagine glycan is attached at N110. The segment at 233-255 (VPEKKKPPSPIKPKIPLSAPRKN) is disordered.

It belongs to the heparin-binding growth factors family. As to quaternary structure, interacts with FGFR1 and FGFR2. Affinity between fibroblast growth factors (FGFs) and their receptors is increased by heparan sulfate glycosaminoglycans that function as coreceptors. As to expression, expressed in neonatal brain.

The protein resides in the secreted. Its function is as follows. Plays an important role in the regulation of cell proliferation and cell differentiation. Required for normal regulation of the hair growth cycle. Functions as an inhibitor of hair elongation by promoting progression from anagen, the growth phase of the hair follicle, into catagen the apoptosis-induced regression phase. In Homo sapiens (Human), this protein is Fibroblast growth factor 5 (FGF5).